We begin with the raw amino-acid sequence, 380 residues long: Flap endonuclease 1 (380 aa).

An N-domain region spans residues 1-104; the sequence is MGIQGLAKLI…GELAKRSERR (104 aa). A Symmetric dimethylarginine; by PRMT5 modification is found at arginine 19. Aspartate 34 lines the Mg(2+) pocket. Positions 47 and 70 each coordinate DNA. Lysine 80 carries the N6-acetyllysine modification. A Mg(2+)-binding site is contributed by aspartate 86. A symmetric dimethylarginine; by PRMT5 mark is found at arginine 100 and arginine 104. An I-domain region spans residues 122–253; that stretch reads EVEKFTKRLV…KRAVDLIQKH (132 aa). Glutamate 158, glutamate 160, aspartate 179, and aspartate 181 together coordinate Mg(2+). Glutamate 158 lines the DNA pocket. The residue at position 187 (serine 187) is a Phosphoserine; by CDK2. The residue at position 192 (arginine 192) is a Symmetric dimethylarginine; by PRMT5. The residue at position 197 (serine 197) is a Phosphoserine. DNA-binding residues include glycine 231 and aspartate 233. Aspartate 233 provides a ligand contact to Mg(2+). Phosphoserine occurs at positions 255, 293, and 335. A disordered region spans residues 327–380; sequence RLSKSRQGSTQGRLDDFFKVTGSLSSAKRKEPEPKGAAKKKAKTGAAGKFKRGK. The residue at position 336 (threonine 336) is a Phosphothreonine. Positions 336-344 are interaction with PCNA; it reads TQGRLDDFF. An N6-acetyllysine mark is found at lysine 354, lysine 375, lysine 377, and lysine 380. Positions 363 to 380 are enriched in basic residues; that stretch reads AAKKKAKTGAAGKFKRGK.

It belongs to the XPG/RAD2 endonuclease family. FEN1 subfamily. In terms of assembly, interacts with PCNA. Three molecules of FEN1 bind to one PCNA trimer with each molecule binding to one PCNA monomer. PCNA stimulates the nuclease activity without altering cleavage specificity. The C-terminal domain binds EP300; can bind simultaneously to both PCNA and EP300. Interacts with DDX11; this interaction is direct and increases flap endonuclease activity of FEN1. Interacts with WDR4; regulating its endonuclease activity. Interacts with POLB. Mg(2+) is required as a cofactor. In terms of processing, acetylated by EP300. Acetylation inhibits both endonuclease and exonuclease activity. Acetylation also reduces DNA-binding activity but does not affect interaction with PCNA or EP300. Post-translationally, phosphorylation upon DNA damage induces relocalization to the nuclear plasma. Phosphorylation at Ser-187 by CDK2 occurs during late S-phase and results in dissociation from PCNA. Methylation at Arg-192 by PRMT5 impedes Ser-187 phosphorylation and increases interaction with PCNA.

It localises to the nucleus. Its subcellular location is the nucleolus. It is found in the nucleoplasm. The protein localises to the mitochondrion. Structure-specific nuclease with 5'-flap endonuclease and 5'-3' exonuclease activities involved in DNA replication and repair. During DNA replication, cleaves the 5'-overhanging flap structure that is generated by displacement synthesis when DNA polymerase encounters the 5'-end of a downstream Okazaki fragment. It enters the flap from the 5'-end and then tracks to cleave the flap base, leaving a nick for ligation. Also involved in the long patch base excision repair (LP-BER) pathway, by cleaving within the apurinic/apyrimidinic (AP) site-terminated flap. Acts as a genome stabilization factor that prevents flaps from equilibrating into structures that lead to duplications and deletions. Also possesses 5'-3' exonuclease activity on nicked or gapped double-stranded DNA, and exhibits RNase H activity. Also involved in replication and repair of rDNA and in repairing mitochondrial DNA. The chain is Flap endonuclease 1 from Bos taurus (Bovine).